The following is a 464-amino-acid chain: Peptidase inhibitor 16 (464 aa).

The first 27 residues, 1 to 27 (MHGSGSLLACLLPPLLLLGAAPGPAGA), serve as a signal peptide directing secretion. The 129-residue stretch at 37-165 (VELHNLYRTQ…TNIHLLVCNY (129 aa)) folds into the SCP domain. N114 carries N-linked (GlcNAc...) asparagine glycosylation. Disordered regions lie at residues 208–241 (DLSS…TEPP), 260–281 (VETK…TKTP), 304–347 (PATL…LMGT), and 386–412 (TTLK…ANAV). Positions 311–325 (STHDPIPKSADKEAS) are enriched in basic and acidic residues. A compositionally biased stretch (low complexity) spans 395–411 (SSKSLSNSPSASATANA).

This sequence belongs to the CRISP family. As to quaternary structure, interacts with PSP94/MSMB. In terms of processing, N-glycosylated.

The protein localises to the secreted. Its function is as follows. May inhibit cardiomyocyte growth. This is Peptidase inhibitor 16 (PI16) from Bos taurus (Bovine).